A 339-amino-acid chain; its full sequence is Uracil nucleotide/cysteinyl leukotriene receptor (339 aa).

Over 1 to 36 (MDGLETALPSLTDNASLAYSEQCGQETPLENMLFAC) the chain is Extracellular. The N-linked (GlcNAc...) asparagine glycan is linked to asparagine 14. The helical transmembrane segment at 37–57 (FYLLDFILAFVGNALALWLFI) threads the bilayer. Over 58 to 64 (WDHKSGT) the chain is Cytoplasmic. The helical transmembrane segment at 65–85 (PANVFLMHLAVADLSCVLVLP) threads the bilayer. Residues 86 to 105 (TRLVYHFSGNHWPFGEIPCR) are Extracellular-facing. A disulfide bridge connects residues cysteine 104 and cysteine 181. The chain crosses the membrane as a helical span at residues 106 to 126 (LTGFLFYLNMYASIYFLTCIS). Over 127-147 (ADRFLAIVHPVKSLKLRRPLY) the chain is Cytoplasmic. A helical transmembrane segment spans residues 148-168 (AHLACAFLWIVVAVAMAPLLV). Residues 169–195 (SPQTVQTNHTVVCLQLYREKASHHALA) lie on the Extracellular side of the membrane. N-linked (GlcNAc...) asparagine glycosylation occurs at asparagine 176. The helical transmembrane segment at 196–216 (SLAVAFTFPFITTVTCYLLII) threads the bilayer. At 217–232 (RSLRQGPRIEKHLKNK) the chain is on the cytoplasmic side. The helical transmembrane segment at 233–253 (AVRMIAMVLAIFLICFVPYHI) threads the bilayer. Residues 254–280 (HRSVYVLHYRGGGTSCSAQRALALGNR) are Extracellular-facing. A helical transmembrane segment spans residues 281 to 301 (ITSCLTSLNGALDPVMYFFVA). Residues 302–339 (EKFRHALCNLLCSKRLTGPPPSFEGKTNESSLSARSEL) are Cytoplasmic-facing.

This sequence belongs to the G-protein coupled receptor 1 family. Expressed in brain, kidney, and heart. Highest level in brain.

The protein localises to the cell membrane. Its function is as follows. Dual specificity receptor for uracil nucleotides and cysteinyl leukotrienes (CysLTs). Signals through G(i) and inhibition of adenylyl cyclase. May mediate brain damage by nucleotides and CysLTs following ischemia. In Rattus norvegicus (Rat), this protein is Uracil nucleotide/cysteinyl leukotriene receptor.